The chain runs to 316 residues: UPF0324 membrane protein SO_4708 (316 aa).

Helical transmembrane passes span 61–80 (LLSY…AAIE), 85–107 (NLGL…TRAL), 114–136 (GHLI…APAV), 146–168 (ALAC…GHLL), 175–197 (FGVW…SAYG), 207–226 (IKLA…ALIF), 233–252 (LNLP…AHWL), 262–281 (LFMV…GAGI), and 293–315 (PLLL…ILYF).

This sequence belongs to the UPF0324 family.

It is found in the cell membrane. The polypeptide is UPF0324 membrane protein SO_4708 (Shewanella oneidensis (strain ATCC 700550 / JCM 31522 / CIP 106686 / LMG 19005 / NCIMB 14063 / MR-1)).